The sequence spans 467 residues: Argininosuccinate lyase (467 aa).

The protein belongs to the lyase 1 family. Argininosuccinate lyase subfamily.

Its subcellular location is the cytoplasm. It catalyses the reaction 2-(N(omega)-L-arginino)succinate = fumarate + L-arginine. It participates in amino-acid biosynthesis; L-arginine biosynthesis; L-arginine from L-ornithine and carbamoyl phosphate: step 3/3. The polypeptide is Argininosuccinate lyase (Rhizobium etli (strain CIAT 652)).